The chain runs to 471 residues: MVKFHLLVLIAFTCYTCSDATLWNPYKKLMRGSASPRRPGESGEPLFLTPLLQDGKIEEARNKARVNHPMLSSVESYSGFMTVDAKHNSNLFFWYVPAKNNREQAPILVWLQGGPGASSLFGMFEENGPFHIHRNKSVKQREYSWHQNHHMIYIDNPVGTGFSFTDSDEGYSTNEEHVGENLMKFIQQFFVLFPNLLKHPFYISGESYGGKFVPAFGYAIHNSQSQPKINLQGLAIGDGYTDPLNQLNYGEYLYELGLIDLNGRKKFDEDTAAAIACAERKDMKCANRLIQGLFDGLDGQESYFKKVTGFSSYYNFIKGDEESKQDSVLMEFLSNPEVRKGIHVGELPFHDSDGHNKVAEMLSEDTLDTVAPWVSKLLSHYRVLFYNGQLDIICAYPMTVDFLMKMPFDGDSEYKRANREIYRVDGEIAGYKKRAGRLQEVLIRNAGHMVPRDQPKWAFDMITSFTHKNYL.

An N-terminal signal peptide occupies residues 1-19 (MVKFHLLVLIAFTCYTCSD). N135 carries N-linked (GlcNAc...) asparagine glycosylation. Residues S207, D391, and H448 contribute to the active site.

The protein belongs to the peptidase S10 family. As to expression, synthesized in the fat body of vitellogenic females, secreted into the hemolymph and accumulates in yolk bodies of developing oocytes.

Its subcellular location is the secreted. Functionally, may play a role in activating hydrolytic enzymes that are involved in the degradation of yolk proteins in developing embryos or may function as an exopeptidase in the degradation of vitellogenin. The protein is Vitellogenic carboxypeptidase (VCP) of Aedes aegypti (Yellowfever mosquito).